Reading from the N-terminus, the 357-residue chain is Tetraacyldisaccharide 4'-kinase (357 aa).

67–74 (SVGGTGKT) is an ATP binding site.

The protein belongs to the LpxK family.

It catalyses the reaction a lipid A disaccharide + ATP = a lipid IVA + ADP + H(+). Its pathway is glycolipid biosynthesis; lipid IV(A) biosynthesis; lipid IV(A) from (3R)-3-hydroxytetradecanoyl-[acyl-carrier-protein] and UDP-N-acetyl-alpha-D-glucosamine: step 6/6. Its function is as follows. Transfers the gamma-phosphate of ATP to the 4'-position of a tetraacyldisaccharide 1-phosphate intermediate (termed DS-1-P) to form tetraacyldisaccharide 1,4'-bis-phosphate (lipid IVA). The sequence is that of Tetraacyldisaccharide 4'-kinase from Syntrophotalea carbinolica (strain DSM 2380 / NBRC 103641 / GraBd1) (Pelobacter carbinolicus).